Reading from the N-terminus, the 77-residue chain is Translation initiation factor IF-1, chloroplastic (77 aa).

The region spanning 1 to 71 is the S1-like domain; it reads MKEQKWIHEG…TKGRIIYRIR (71 aa).

Belongs to the IF-1 family. Component of the 30S ribosomal translation pre-initiation complex which assembles on the 30S ribosome in the order IF-2 and IF-3, IF-1 and N-formylmethionyl-tRNA(fMet); mRNA recruitment can occur at any time during PIC assembly.

It is found in the plastid. It localises to the chloroplast. In terms of biological role, one of the essential components for the initiation of protein synthesis. Stabilizes the binding of IF-2 and IF-3 on the 30S subunit to which N-formylmethionyl-tRNA(fMet) subsequently binds. Helps modulate mRNA selection, yielding the 30S pre-initiation complex (PIC). Upon addition of the 50S ribosomal subunit IF-1, IF-2 and IF-3 are released leaving the mature 70S translation initiation complex. This is Translation initiation factor IF-1, chloroplastic from Vitis vinifera (Grape).